The primary structure comprises 214 residues: Phosphatidylserine decarboxylase proenzyme (214 aa).

Ser183 functions as the Schiff-base intermediate with substrate; via pyruvic acid in the catalytic mechanism. Position 183 is a pyruvic acid (Ser); by autocatalysis (Ser183).

This sequence belongs to the phosphatidylserine decarboxylase family. PSD-A subfamily. Heterodimer of a large membrane-associated beta subunit and a small pyruvoyl-containing alpha subunit. The cofactor is pyruvate. Post-translationally, is synthesized initially as an inactive proenzyme. Formation of the active enzyme involves a self-maturation process in which the active site pyruvoyl group is generated from an internal serine residue via an autocatalytic post-translational modification. Two non-identical subunits are generated from the proenzyme in this reaction, and the pyruvate is formed at the N-terminus of the alpha chain, which is derived from the carboxyl end of the proenzyme. The post-translation cleavage follows an unusual pathway, termed non-hydrolytic serinolysis, in which the side chain hydroxyl group of the serine supplies its oxygen atom to form the C-terminus of the beta chain, while the remainder of the serine residue undergoes an oxidative deamination to produce ammonia and the pyruvoyl prosthetic group on the alpha chain.

The protein localises to the cell membrane. The enzyme catalyses a 1,2-diacyl-sn-glycero-3-phospho-L-serine + H(+) = a 1,2-diacyl-sn-glycero-3-phosphoethanolamine + CO2. It functions in the pathway phospholipid metabolism; phosphatidylethanolamine biosynthesis; phosphatidylethanolamine from CDP-diacylglycerol: step 2/2. Functionally, catalyzes the formation of phosphatidylethanolamine (PtdEtn) from phosphatidylserine (PtdSer). The sequence is that of Phosphatidylserine decarboxylase proenzyme from Desulfotalea psychrophila (strain LSv54 / DSM 12343).